A 1038-amino-acid polypeptide reads, in one-letter code: Fibronectin-binding protein A (1038 aa).

A signal peptide spans Met-1–Ala-36. The YSIRK-G/S signaling motif signature appears at Tyr-7 to Ser-18. Residues Ala-37–Thr-193 form a disordered region. A ligand-binding A region region spans residues Ala-37 to Asn-507. Polar residues predominate over residues Glu-39–Thr-92. A compositionally biased stretch (basic and acidic residues) spans Thr-112–Val-121. Positions Lys-122–Glu-164 are enriched in polar residues. Residues Asp-174 to Gly-189 show a composition bias toward basic and acidic residues. The interval Gly-189–Asn-507 is fibrinogen/elastin/tropoelastin-binding. A fibronectin-binding region spans residues Gly-508 to Thr-868. The stretch at Glu-541–Ile-570 is one B-1 repeat. Residues Glu-541 to Ser-600 form a 2 X approximate tandem repeats region. One copy of the B-2 repeat lies at Glu-571 to Ser-600. Disordered stretches follow at residues Leu-736–Ile-804, Ile-825–Val-976, and Val-989–Met-1015. The D-1 repeat unit spans residues Gly-741–His-778. A 4 X approximate tandem repeats region spans residues Gly-741–Thr-898. A D-2 repeat occupies Gly-779–His-816. A D-3 repeat occupies Gly-817–Ser-855. Basic and acidic residues predominate over residues Ile-825–Pro-834. The D-4 repeat unit spans residues Gly-856 to Thr-898. Positions Pro-870–Pro-958 are enriched in pro residues. 5 WR repeats span residues Pro-899 to Thr-912, Pro-913 to Thr-926, Pro-927 to Thr-940, Pro-941 to Lys-954, and Pro-955 to Lys-968. A 5 X tandem repeats, Pro-rich (WR) region spans residues Pro-899–Lys-968. The short motif at Leu-1002–Gly-1006 is the LPXTG sorting signal element. Residue Thr-1005 is modified to Pentaglycyl murein peptidoglycan amidated threonine. Residues Gly-1006–Ala-1038 constitute a propeptide, removed by sortase.

The protein localises to the secreted. It is found in the cell wall. In terms of biological role, promotes bacterial attachment to multiple substrates, such as fibronectin (Fn), fibrinogen (Fg), elastin peptides and tropoelastin. This confers to S.aureus the ability to invade endothelial cells. Promotes adherence to and aggregation of activated platelets. The sequence is that of Fibronectin-binding protein A (fnbA) from Staphylococcus aureus (strain Mu50 / ATCC 700699).